The sequence spans 516 residues: tRNA-guanine(15) transglycosylase (516 aa).

The active-site Nucleophile is the D93. D128 and A196 together coordinate substrate. The Zn(2+) site is built by C279, C281, and C284. The segment covering 488-502 (LSAVSERLGDEASVG) has biased composition (low complexity). Positions 488 to 516 (LSAVSERLGDEASVGGDDGDDGGSASSAE) are disordered.

The protein belongs to the archaeosine tRNA-ribosyltransferase family. Zn(2+) serves as cofactor.

The enzyme catalyses guanosine(15) in tRNA + 7-cyano-7-deazaguanine = 7-cyano-7-carbaguanosine(15) in tRNA + guanine. It functions in the pathway tRNA modification; archaeosine-tRNA biosynthesis. Exchanges the guanine residue with 7-cyano-7-deazaguanine (preQ0) at position 15 in the dihydrouridine loop (D-loop) of archaeal tRNAs. This chain is tRNA-guanine(15) transglycosylase, found in Haloferax volcanii (strain ATCC 29605 / DSM 3757 / JCM 8879 / NBRC 14742 / NCIMB 2012 / VKM B-1768 / DS2) (Halobacterium volcanii).